A 520-amino-acid polypeptide reads, in one-letter code: Major capsid protein (520 aa).

This sequence belongs to the NCLDV major capsid protein family.

The protein resides in the virion. Functionally, major capsid protein that self assembles to form an icosahedral capsid with a T=219 symmetry. This chain is Major capsid protein (MCP), found in Phaeocystis pouchetii (PpV01).